Reading from the N-terminus, the 122-residue chain is MGYRKLGRTSDQRKAMLRDLATSLIISERIETTEARAKEVRSVVEKLITLGKKGDLASRRNAAKTLRNVEILNEDETTQTALQKLFGEIAERYTERQGGYTRILKQGPRRGDGAESVIIELV.

This sequence belongs to the bacterial ribosomal protein bL17 family. As to quaternary structure, part of the 50S ribosomal subunit. Contacts protein L32.

This chain is Large ribosomal subunit protein bL17, found in Staphylococcus aureus (strain Mu3 / ATCC 700698).